The primary structure comprises 124 residues: Small ribosomal subunit protein uS12 (124 aa).

Aspartate 89 carries the post-translational modification 3-methylthioaspartic acid.

Belongs to the universal ribosomal protein uS12 family. In terms of assembly, part of the 30S ribosomal subunit. Contacts proteins S8 and S17. May interact with IF1 in the 30S initiation complex.

Its function is as follows. With S4 and S5 plays an important role in translational accuracy. In terms of biological role, interacts with and stabilizes bases of the 16S rRNA that are involved in tRNA selection in the A site and with the mRNA backbone. Located at the interface of the 30S and 50S subunits, it traverses the body of the 30S subunit contacting proteins on the other side and probably holding the rRNA structure together. The combined cluster of proteins S8, S12 and S17 appears to hold together the shoulder and platform of the 30S subunit. The polypeptide is Small ribosomal subunit protein uS12 (Tolumonas auensis (strain DSM 9187 / NBRC 110442 / TA 4)).